The sequence spans 185 residues: uncharacterized protein (185 aa).

Positions 1–29 (MKLFSRTSLVALGTAAAITLSGVTAPAFA) are cleaved as a signal peptide. A disordered region spans residues 41–66 (KTAEDNTPEAPGASTPLKLEQPGTIT).

In terms of processing, glycosylated; by Pmt.

Its subcellular location is the secreted. This is an uncharacterized protein from Corynebacterium glutamicum (strain ATCC 13032 / DSM 20300 / JCM 1318 / BCRC 11384 / CCUG 27702 / LMG 3730 / NBRC 12168 / NCIMB 10025 / NRRL B-2784 / 534).